The primary structure comprises 1223 residues: DNA-directed RNA polymerase subunit beta'' (1223 aa).

Zn(2+)-binding residues include Cys-233, Cys-307, Cys-314, and Cys-317.

It belongs to the RNA polymerase beta' chain family. RpoC2 subfamily. In plastids the minimal PEP RNA polymerase catalytic core is composed of four subunits: alpha, beta, beta', and beta''. When a (nuclear-encoded) sigma factor is associated with the core the holoenzyme is formed, which can initiate transcription. The cofactor is Zn(2+).

Its subcellular location is the plastid. It is found in the chloroplast. It catalyses the reaction RNA(n) + a ribonucleoside 5'-triphosphate = RNA(n+1) + diphosphate. In terms of biological role, DNA-dependent RNA polymerase catalyzes the transcription of DNA into RNA using the four ribonucleoside triphosphates as substrates. The sequence is that of DNA-directed RNA polymerase subunit beta'' from Mesostigma viride (Green alga).